Reading from the N-terminus, the 368-residue chain is DNA replication and repair protein RecF (368 aa).

30 to 37 contacts ATP; the sequence is GKNGSGKT.

It belongs to the RecF family.

It localises to the cytoplasm. In terms of biological role, the RecF protein is involved in DNA metabolism; it is required for DNA replication and normal SOS inducibility. RecF binds preferentially to single-stranded, linear DNA. It also seems to bind ATP. The polypeptide is DNA replication and repair protein RecF (Marinomonas sp. (strain MWYL1)).